The following is a 36-amino-acid chain: Neurotoxin PRTx26An0C3 (36 aa).

Intrachain disulfides connect Cys3–Cys17, Cys10–Cys22, and Cys16–Cys34.

Expressed by the venom gland.

The protein localises to the secreted. Its function is as follows. Neurotoxin. Causes spastic paralysis and death in mice. Moderate inhibitor of L-type calcium channels (Cav1/CACNA1). This chain is Neurotoxin PRTx26An0C3, found in Phoneutria nigriventer (Brazilian armed spider).